Consider the following 215-residue polypeptide: ATP-dependent dethiobiotin synthetase BioD (215 aa).

13 to 18 (DIGKTV) provides a ligand contact to ATP. Thr17 contacts Mg(2+). Lys38 is an active-site residue. Position 42 (Thr42) interacts with substrate. Residues Asp50, 115-118 (EGAG), and 175-176 (NH) contribute to the ATP site. Residues Asp50 and Glu115 each coordinate Mg(2+).

Belongs to the dethiobiotin synthetase family. Homodimer. Mg(2+) is required as a cofactor.

It localises to the cytoplasm. The enzyme catalyses (7R,8S)-7,8-diammoniononanoate + CO2 + ATP = (4R,5S)-dethiobiotin + ADP + phosphate + 3 H(+). It participates in cofactor biosynthesis; biotin biosynthesis; biotin from 7,8-diaminononanoate: step 1/2. Its function is as follows. Catalyzes a mechanistically unusual reaction, the ATP-dependent insertion of CO2 between the N7 and N8 nitrogen atoms of 7,8-diaminopelargonic acid (DAPA, also called 7,8-diammoniononanoate) to form a ureido ring. This is ATP-dependent dethiobiotin synthetase BioD from Neisseria gonorrhoeae (strain NCCP11945).